The chain runs to 438 residues: MSYFPTVDKVIYEGPDSDSPLAFRHYDADKRVLGKPMREHLRMAACYWHTFVWPGADMFGVGTFKRPWQRAGDPMELAIGKAEAAFEFFSKLGIDYYSFHDTDVAPEGSSIKEYRNNFAQMVDRLERHQEQSGIKLLWGTANCFSNPRFAAGAASNPDPEVFAYAGAQVFSAMNATQRLKGSNYVLWGGREGYETLLNTDLKREREQLGRFMRMVVEHKHKIGFKGDLLIEPKPQEPTKHQYDYDSATVFGFLHQYGLQDEIKVNIEANHATLAGHSFHHEIATAVSLGIFGSIDANRGDPQNGWDTDQFPNSVEEMTLATYEILKAGGFTHGGYNFDSKVRRQSLDDVDLFHGHVAAMDVLALSLERAAAMVQNDKLQQFKDQRYAGWQQPFGQSVLSGGFSLASLAEHAFANELNPQAVSGRQELLEGVVNRFIYT.

Catalysis depends on residues histidine 100 and aspartate 103. Mg(2+)-binding residues include glutamate 231, glutamate 267, histidine 270, aspartate 295, aspartate 306, aspartate 308, and aspartate 338.

Belongs to the xylose isomerase family. As to quaternary structure, homotetramer. Mg(2+) is required as a cofactor.

The protein resides in the cytoplasm. It carries out the reaction alpha-D-xylose = alpha-D-xylulofuranose. The sequence is that of Xylose isomerase from Pseudomonas syringae pv. tomato (strain ATCC BAA-871 / DC3000).